We begin with the raw amino-acid sequence, 37 residues long: Large ribosomal subunit protein bL36c (37 aa).

Belongs to the bacterial ribosomal protein bL36 family.

It is found in the plastid. Its subcellular location is the chloroplast. The sequence is that of Large ribosomal subunit protein bL36c from Oltmannsiellopsis viridis (Marine flagellate).